The following is a 561-amino-acid chain: GPI mannosyltransferase 3 (561 aa).

A run of 8 helical transmembrane segments spans residues 3-25 (LIYV…QTYY), 64-84 (IAGL…LLVV), 110-130 (WALF…RTLA), 155-175 (LWPA…WLPL), 195-215 (FVLI…YWHG), 246-266 (FSVG…FGVM), 275-295 (YPVS…LSAV), and 328-348 (TMLW…AWYL). Residues Asn-398 and Asn-456 are each glycosylated (N-linked (GlcNAc...) asparagine). Residues 525–546 (ENAFNRGPDSGQHEPDVHDHPP) are disordered. The span at 535–546 (GQHEPDVHDHPP) shows a compositional bias: basic and acidic residues.

The protein belongs to the glycosyltransferase 22 family. PIGB subfamily.

The protein localises to the endoplasmic reticulum membrane. It functions in the pathway glycolipid biosynthesis; glycosylphosphatidylinositol-anchor biosynthesis. Its function is as follows. Mannosyltransferase involved in glycosylphosphatidylinositol-anchor biosynthesis. Transfers the third alpha-1,2-mannose to Man2-GlcN-acyl-PI during GPI precursor assembly. This is GPI mannosyltransferase 3 from Drosophila melanogaster (Fruit fly).